The primary structure comprises 339 residues: Phenylalanine--tRNA ligase alpha subunit (339 aa).

Residue Glu-250 coordinates Mg(2+).

This sequence belongs to the class-II aminoacyl-tRNA synthetase family. Phe-tRNA synthetase alpha subunit type 1 subfamily. In terms of assembly, tetramer of two alpha and two beta subunits. It depends on Mg(2+) as a cofactor.

It is found in the cytoplasm. The catalysed reaction is tRNA(Phe) + L-phenylalanine + ATP = L-phenylalanyl-tRNA(Phe) + AMP + diphosphate + H(+). The protein is Phenylalanine--tRNA ligase alpha subunit of Flavobacterium johnsoniae (strain ATCC 17061 / DSM 2064 / JCM 8514 / BCRC 14874 / CCUG 350202 / NBRC 14942 / NCIMB 11054 / UW101) (Cytophaga johnsonae).